The following is a 362-amino-acid chain: Probable RNA methyltransferase Tbd_1951 (362 aa).

Glutamate 89 functions as the Proton acceptor in the catalytic mechanism. The Radical SAM core domain occupies 92-318 (LLPRDGVCVS…AKLRHSAGQD (227 aa)). Cysteine 99 and cysteine 323 are disulfide-bonded. [4Fe-4S] cluster is bound by residues cysteine 106, cysteine 110, and cysteine 113. Residues 151–152 (GE), serine 181, 204–206 (SLH), and asparagine 280 contribute to the S-adenosyl-L-methionine site. Cysteine 323 (S-methylcysteine intermediate) is an active-site residue. Residues 342–362 (LPSAETPAASPKAAASIGFPG) are disordered. Low complexity predominate over residues 343–362 (PSAETPAASPKAAASIGFPG).

The protein belongs to the radical SAM superfamily. RlmN family. [4Fe-4S] cluster serves as cofactor.

It localises to the cytoplasm. This chain is Probable RNA methyltransferase Tbd_1951, found in Thiobacillus denitrificans (strain ATCC 25259 / T1).